The primary structure comprises 657 residues: Acetyl-coenzyme A synthetase (657 aa).

CoA contacts are provided by residues 192–195 (RRGK) and Thr-311. ATP-binding positions include 387-389 (GEP), 411-416 (DTWWQT), Asp-504, Arg-519, and Arg-530. Positions 543 and 546 each coordinate Mg(2+). A CoA-binding site is contributed by Arg-592. Residue Lys-617 is modified to N6-acetyllysine.

This sequence belongs to the ATP-dependent AMP-binding enzyme family. Requires Mg(2+) as cofactor. Post-translationally, acetylated. Deacetylation by the SIR2-homolog deacetylase activates the enzyme.

It catalyses the reaction acetate + ATP + CoA = acetyl-CoA + AMP + diphosphate. In terms of biological role, catalyzes the conversion of acetate into acetyl-CoA (AcCoA), an essential intermediate at the junction of anabolic and catabolic pathways. AcsA undergoes a two-step reaction. In the first half reaction, AcsA combines acetate with ATP to form acetyl-adenylate (AcAMP) intermediate. In the second half reaction, it can then transfer the acetyl group from AcAMP to the sulfhydryl group of CoA, forming the product AcCoA. This is Acetyl-coenzyme A synthetase from Campylobacter jejuni subsp. jejuni serotype O:6 (strain 81116 / NCTC 11828).